A 485-amino-acid polypeptide reads, in one-letter code: D-alanine--D-alanyl carrier protein ligase (485 aa).

144 to 145 (TS) provides a ligand contact to ATP. Aspartate 189 provides a ligand contact to D-alanine. 284-289 (NTYGPT) lines the ATP pocket. Position 293 (valine 293) interacts with D-alanine. Aspartate 365 and lysine 473 together coordinate ATP. Lysine 473 provides a ligand contact to D-alanine.

It belongs to the ATP-dependent AMP-binding enzyme family. DltA subfamily.

The protein localises to the cytoplasm. The catalysed reaction is holo-[D-alanyl-carrier protein] + D-alanine + ATP = D-alanyl-[D-alanyl-carrier protein] + AMP + diphosphate. It participates in cell wall biogenesis; lipoteichoic acid biosynthesis. Its function is as follows. Catalyzes the first step in the D-alanylation of lipoteichoic acid (LTA), the activation of D-alanine and its transfer onto the D-alanyl carrier protein (Dcp) DltC. In an ATP-dependent two-step reaction, forms a high energy D-alanyl-AMP intermediate, followed by transfer of the D-alanyl residue as a thiol ester to the phosphopantheinyl prosthetic group of the Dcp. D-alanylation of LTA plays an important role in modulating the properties of the cell wall in Gram-positive bacteria, influencing the net charge of the cell wall. In Staphylococcus haemolyticus (strain JCSC1435), this protein is D-alanine--D-alanyl carrier protein ligase.